The chain runs to 591 residues: MKKISLPKIGIRPVIDGRRMGVRESLEEQTMNMAKATAALLTEKLRHACGAAVECVISDTCIAGMAEAAACEEKFSSQNVGLTITVTPCWCYGSETIDMDPTRPKAIWGFNGTERPGAVYLAAALAAHSQKGIPAFSIYGHDVQDADDTSIPADVEEKLLRFARAGLAVASMKGKSYLSLGGVSMGIAGSIVDHNFFESWLGMKVQAVDMTELRRRIDQKIYDEAELEMALAWADKNFRYGEDENNKQYQRNAEQSRAVLRESLLMAMCIRDMMQGNSKLADIGRVEESLGYNAIAAGFQGQRHWTDQYPNGDTAEAILNSSFDWNGVREPFVVATENDSLNGVAMLMGHQLTGTAQVFADVRTYWSPEAIERVTGHKLDGLAEHGIIHLINSGSAALDGSCKQRDSEGNPTMKPHWEISQKEADACLAATEWCPAIHEYFRGGGYSSRFLTEGGVPFTMTRVNIIKGLGPVLQIAEGWSVELPKDVHDILNKRTNSTWPTTWFAPRLTGKGPFTDVYSVMANWGANHGVLTIGHVGADFITLASMLRIPVCMHNVEETKVYRPSAWAAHGMDIEGQDYRACQNYGPLYKR.

Catalysis depends on proton acceptor residues Glu-337 and Asp-361. Residues Glu-337, Asp-361, and His-528 each coordinate Mn(2+).

It belongs to the L-fucose isomerase family. Homohexamer. Mn(2+) serves as cofactor.

It is found in the cytoplasm. The enzyme catalyses L-fucose = L-fuculose. Its pathway is carbohydrate degradation; L-fucose degradation; L-lactaldehyde and glycerone phosphate from L-fucose: step 1/3. In terms of biological role, converts the aldose L-fucose into the corresponding ketose L-fuculose. In Escherichia coli O139:H28 (strain E24377A / ETEC), this protein is L-fucose isomerase.